Consider the following 358-residue polypeptide: Tyrosinase ustQ (358 aa).

Residue N28 is glycosylated (N-linked (GlcNAc...) asparagine). A helical transmembrane segment spans residues 37-57; that stretch reads FVPVYAGLTIISLITVTVSLV. N-linked (GlcNAc...) asparagine glycans are attached at residues N91 and N109. Cu cation is bound by residues H128 and H137. N-linked (GlcNAc...) asparagine glycosylation is found at N172 and N214. H266, H270, and H292 together coordinate Cu cation. N-linked (GlcNAc...) asparagine glycans are attached at residues N321 and N325.

It belongs to the tyrosinase family. The cofactor is Cu(2+).

The protein localises to the membrane. The catalysed reaction is 2 L-dopa + O2 = 2 L-dopaquinone + 2 H2O. It carries out the reaction L-tyrosine + O2 = L-dopaquinone + H2O. It participates in mycotoxin biosynthesis. In terms of biological role, tyrosinase; part of the gene cluster that mediates the biosynthesis of the secondary metabolite ustiloxin B, an antimitotic tetrapeptide. First, ustA is processed by the subtilisin-like endoprotease Kex2 that is outside the ustiloxin B gene cluster, at the C-terminal side of Arg-Lys, after transfer to Golgi apparatus through the endoplasmic reticulum (ER). Cleavage by KEX2 generates 16 peptides YAIG-I to YAIG-XVI. To process the precursor peptide further, at least two peptidases are necessary to cleave the N-terminal and C-terminal sides of the Tyr-Ala-Ile-Gly core peptide which serves as backbone for the synthesis of ustiloxin B, through cyclization and modification of the tyrosine with a non-protein coding amino acid, norvaline. One of the two peptidases must be the serine peptidase ustP; and the other pepdidase is probably ustH. Macrocyclization of the core peptide derived from ustA requires the tyrosinase ustQ, as well as the homologous oxidases ustYa and ustYb, and leads to the production of the first cyclization product N-desmethylustiloxin F. For the formation of N-desmethylustiloxin F, three oxidation steps are required, hydroxylation at the benzylic position, hydroxylation at either the aromatic ring of Tyr or beta-position of Ile, and oxidative cyclization. UstQ may catalyze the oxidation of a phenol moiety, whereas the ustYa and ustYb are most likely responsible for the remaining two-step oxidations. N-desmethylustiloxin F is then methylated by ustM to yield ustiloxin F which in turn substrate of the cytochrome P450 monooxygenase ustC which catalyzes the formation of S-deoxyustiloxin H. The flavoprotein monooxygenases ustF1 and ustF2 then participate in the modification of the side chain of S-deoxyustiloxin H, leading to the synthesis of an oxime intermediate, via ustiloxin H. Finally, carboxylative dehydration performed by the cysteine desulfurase-like protein ustD yields ustiloxin B. This Aspergillus flavus (strain ATCC 200026 / FGSC A1120 / IAM 13836 / NRRL 3357 / JCM 12722 / SRRC 167) protein is Tyrosinase ustQ.